The following is a 583-amino-acid chain: Propane 2-monooxygenase operon transcriptional activator MimR (583 aa).

The Sigma-54 factor interaction domain occupies 320–513 (LAGRSSSFRR…LRHVLTETLR (194 aa)). ATP is bound by residues 348–355 (GEKGSGRT) and 395–404 (DADFAVIVAD).

In terms of biological role, acts as a transcriptional activator of the mimABCD operon encoding the propane 2-monooxygenase complex. The protein is Propane 2-monooxygenase operon transcriptional activator MimR of Mycolicibacterium goodii (Mycobacterium goodii).